A 268-amino-acid chain; its full sequence is Ribosomal RNA small subunit methyltransferase A (268 aa).

Residues asparagine 23, leucine 25, glycine 50, glutamate 72, aspartate 94, and asparagine 116 each contribute to the S-adenosyl-L-methionine site.

Belongs to the class I-like SAM-binding methyltransferase superfamily. rRNA adenine N(6)-methyltransferase family. RsmA subfamily.

The protein resides in the cytoplasm. It catalyses the reaction adenosine(1518)/adenosine(1519) in 16S rRNA + 4 S-adenosyl-L-methionine = N(6)-dimethyladenosine(1518)/N(6)-dimethyladenosine(1519) in 16S rRNA + 4 S-adenosyl-L-homocysteine + 4 H(+). Functionally, specifically dimethylates two adjacent adenosines (A1518 and A1519) in the loop of a conserved hairpin near the 3'-end of 16S rRNA in the 30S particle. May play a critical role in biogenesis of 30S subunits. This chain is Ribosomal RNA small subunit methyltransferase A, found in Mycoplasmoides gallisepticum (strain R(low / passage 15 / clone 2)) (Mycoplasma gallisepticum).